The chain runs to 293 residues: Undecaprenyl-diphosphatase (293 aa).

7 helical membrane passes run 3–23, 43–63, 85–105, 109–129, 203–223, 238–258, and 269–289; these read IALA…EFLP, KGKI…CWEF, INVI…GKAI, LFNP…ILWA, VATE…TVYE, IFAV…RWLL, and FAWY…THLI.

The protein belongs to the UppP family.

The protein resides in the cell inner membrane. It carries out the reaction di-trans,octa-cis-undecaprenyl diphosphate + H2O = di-trans,octa-cis-undecaprenyl phosphate + phosphate + H(+). Catalyzes the dephosphorylation of undecaprenyl diphosphate (UPP). Confers resistance to bacitracin. This chain is Undecaprenyl-diphosphatase, found in Ralstonia pickettii (strain 12J).